The following is a 295-amino-acid chain: tRNA(Ile)-lysidine synthase (295 aa).

10 to 15 (SGGPDS) contributes to the ATP binding site.

Belongs to the tRNA(Ile)-lysidine synthase family.

Its subcellular location is the cytoplasm. The enzyme catalyses cytidine(34) in tRNA(Ile2) + L-lysine + ATP = lysidine(34) in tRNA(Ile2) + AMP + diphosphate + H(+). Ligates lysine onto the cytidine present at position 34 of the AUA codon-specific tRNA(Ile) that contains the anticodon CAU, in an ATP-dependent manner. Cytidine is converted to lysidine, thus changing the amino acid specificity of the tRNA from methionine to isoleucine. This Malacoplasma penetrans (strain HF-2) (Mycoplasma penetrans) protein is tRNA(Ile)-lysidine synthase.